The chain runs to 161 residues: Ribonuclease H (161 aa).

Residues 5 to 149 form the RNase H type-1 domain; the sequence is EKLAIAAATD…VDAIAVAFSK (145 aa). The Mg(2+) site is built by Asp-14, Glu-53, Asp-78, and Asp-141.

This sequence belongs to the RNase H family. As to quaternary structure, monomer. It depends on Mg(2+) as a cofactor.

Its subcellular location is the cytoplasm. The enzyme catalyses Endonucleolytic cleavage to 5'-phosphomonoester.. Endonuclease that specifically degrades the RNA of RNA-DNA hybrids. This is Ribonuclease H from Prochlorococcus marinus (strain NATL1A).